A 544-amino-acid polypeptide reads, in one-letter code: Chaperonin GroEL (544 aa).

ATP contacts are provided by residues 30 to 33 (TLGP), lysine 51, 87 to 91 (DGTTT), glycine 415, 479 to 481 (NAA), and aspartate 495.

Belongs to the chaperonin (HSP60) family. Forms a cylinder of 14 subunits composed of two heptameric rings stacked back-to-back. Interacts with the co-chaperonin GroES.

It is found in the cytoplasm. The enzyme catalyses ATP + H2O + a folded polypeptide = ADP + phosphate + an unfolded polypeptide.. Its function is as follows. Together with its co-chaperonin GroES, plays an essential role in assisting protein folding. The GroEL-GroES system forms a nano-cage that allows encapsulation of the non-native substrate proteins and provides a physical environment optimized to promote and accelerate protein folding. This is Chaperonin GroEL from Francisella tularensis subsp. tularensis (strain SCHU S4 / Schu 4).